The sequence spans 330 residues: Neurogenic differentiation factor 4 (330 aa).

The interval 1–79 (MTKTYTKAKE…RGPKKKKMTK (79 aa)) is disordered. Residues 25 to 35 (LSSKDELKAEN) are compositionally biased toward basic and acidic residues. Over residues 52 to 64 (DSIEEEEEEEDDG) the composition is skewed to acidic residues. Basic residues predominate over residues 67-79 (PKRRGPKKKKMTK). The Nuclear localization signal motif lies at 73–79 (KKKKMTK). The region spanning 87-139 (ARRVKANARERTRMHGLNDALDNLRRVMPCYSKTQKLSKIETLRLARNYIWAL) is the bHLH domain. The tract at residues 162–183 (LSQPTSNLVAGCLQLGPQTLFL) is leucine-zipper.

As to quaternary structure, efficient DNA binding requires dimerization with another bHLH protein. Post-translationally, serine or threonine phosphorylation within the basic region may regulate neurogenic activity. In terms of tissue distribution, expressed in both the developing central nervous system and peripheral nervous system.

The protein localises to the nucleus. Functionally, probably acts as a transcriptional activator. Mediates neuronal differentiation. Required for the regulation of amacrine cell fate specification in the retina. The protein is Neurogenic differentiation factor 4 (NEUROD4) of Gallus gallus (Chicken).